A 170-amino-acid polypeptide reads, in one-letter code: Peptide deformylase (170 aa).

Residues Cys93 and His135 each contribute to the Fe cation site. Glu136 is a catalytic residue. His139 contributes to the Fe cation binding site.

Belongs to the polypeptide deformylase family. It depends on Fe(2+) as a cofactor.

It carries out the reaction N-terminal N-formyl-L-methionyl-[peptide] + H2O = N-terminal L-methionyl-[peptide] + formate. Removes the formyl group from the N-terminal Met of newly synthesized proteins. Requires at least a dipeptide for an efficient rate of reaction. N-terminal L-methionine is a prerequisite for activity but the enzyme has broad specificity at other positions. This Syntrophobacter fumaroxidans (strain DSM 10017 / MPOB) protein is Peptide deformylase.